Here is a 116-residue protein sequence, read N- to C-terminus: NADH-ubiquinone oxidoreductase chain 3 (116 aa).

Helical transmembrane passes span 3 to 23 (LITT…TISF), 56 to 76 (FFLI…LLPL), and 87 to 107 (LTLI…IYEW).

Belongs to the complex I subunit 3 family.

It is found in the mitochondrion membrane. The catalysed reaction is a ubiquinone + NADH + 5 H(+)(in) = a ubiquinol + NAD(+) + 4 H(+)(out). Functionally, core subunit of the mitochondrial membrane respiratory chain NADH dehydrogenase (Complex I) that is believed to belong to the minimal assembly required for catalysis. Complex I functions in the transfer of electrons from NADH to the respiratory chain. The immediate electron acceptor for the enzyme is believed to be ubiquinone. The chain is NADH-ubiquinone oxidoreductase chain 3 (MT-ND3) from Oncorhynchus gorbuscha (Pink salmon).